Here is a 402-residue protein sequence, read N- to C-terminus: Mannonate dehydratase (402 aa).

Belongs to the mannonate dehydratase family. Fe(2+) is required as a cofactor. Mn(2+) serves as cofactor.

It carries out the reaction D-mannonate = 2-dehydro-3-deoxy-D-gluconate + H2O. It functions in the pathway carbohydrate metabolism; pentose and glucuronate interconversion. Catalyzes the dehydration of D-mannonate. This chain is Mannonate dehydratase, found in Rhizobium meliloti (strain 1021) (Ensifer meliloti).